The primary structure comprises 310 residues: Aspartate carbamoyltransferase catalytic subunit (310 aa).

2 residues coordinate carbamoyl phosphate: arginine 58 and threonine 59. An L-aspartate-binding site is contributed by lysine 86. Residues arginine 108, histidine 136, and glutamine 139 each coordinate carbamoyl phosphate. Residues arginine 169 and arginine 224 each contribute to the L-aspartate site. Carbamoyl phosphate contacts are provided by glycine 265 and proline 266.

The protein belongs to the aspartate/ornithine carbamoyltransferase superfamily. ATCase family. Heterododecamer (2C3:3R2) of six catalytic PyrB chains organized as two trimers (C3), and six regulatory PyrI chains organized as three dimers (R2).

The enzyme catalyses carbamoyl phosphate + L-aspartate = N-carbamoyl-L-aspartate + phosphate + H(+). It functions in the pathway pyrimidine metabolism; UMP biosynthesis via de novo pathway; (S)-dihydroorotate from bicarbonate: step 2/3. Functionally, catalyzes the condensation of carbamoyl phosphate and aspartate to form carbamoyl aspartate and inorganic phosphate, the committed step in the de novo pyrimidine nucleotide biosynthesis pathway. The chain is Aspartate carbamoyltransferase catalytic subunit from Geobacter sp. (strain M21).